The following is a 124-amino-acid chain: Small ribosomal subunit protein bS6 (124 aa).

A disordered region spans residues 96–124 (ETGPSPMMKEVQREEAKKAAAAQPAEAQA). Low complexity predominate over residues 114-124 (AAAAQPAEAQA).

This sequence belongs to the bacterial ribosomal protein bS6 family.

Binds together with bS18 to 16S ribosomal RNA. This Burkholderia orbicola (strain MC0-3) protein is Small ribosomal subunit protein bS6.